The sequence spans 119 residues: Large ribosomal subunit protein uL22 (119 aa).

The protein belongs to the universal ribosomal protein uL22 family. In terms of assembly, part of the 50S ribosomal subunit.

This protein binds specifically to 23S rRNA; its binding is stimulated by other ribosomal proteins, e.g. L4, L17, and L20. It is important during the early stages of 50S assembly. It makes multiple contacts with different domains of the 23S rRNA in the assembled 50S subunit and ribosome. Its function is as follows. The globular domain of the protein is located near the polypeptide exit tunnel on the outside of the subunit, while an extended beta-hairpin is found that lines the wall of the exit tunnel in the center of the 70S ribosome. In Bifidobacterium adolescentis (strain ATCC 15703 / DSM 20083 / NCTC 11814 / E194a), this protein is Large ribosomal subunit protein uL22.